A 314-amino-acid polypeptide reads, in one-letter code: Taste receptor type 2 member 42 (314 aa).

Residues 1–7 (MATELDK) are Extracellular-facing. Residues 8 to 28 (IFLILAIAEFIISMLGNVFIG) form a helical membrane-spanning segment. Topologically, residues 29-50 (LVNCSEGIKNQKVFSADFILTC) are cytoplasmic. Residues 51–71 (LAISTIGQLLVILFDSFLVGL) traverse the membrane as a helical segment. Residues 72–101 (ASHLYTTYRLGKTVIMLWHMTNHLTTWLAT) lie on the Extracellular side of the membrane. A helical membrane pass occupies residues 102–122 (CLSIFYFFKIAHFPHSLFLWL). Residues 123-127 (RWRMN) lie on the Cytoplasmic side of the membrane. A helical membrane pass occupies residues 128-148 (GMIVMLLILSLFLLIFDSLVL). Topologically, residues 149–187 (EIFIDISLNIIDKSNLTLYLDESKTLYDKLSILKTLLSL) are extracellular. An N-linked (GlcNAc...) asparagine glycan is attached at asparagine 163. Residues 188–208 (TSFIPFSLFLTSLLFLFLSLV) traverse the membrane as a helical segment. The Cytoplasmic segment spans residues 209–238 (RHTRNLKLSSLGSRDSSTEAHRRAMKMVMS). A helical membrane pass occupies residues 239–259 (FLFLFIVHFFSLQVANWIFFM). Over 260–265 (LWNNKC) the chain is Extracellular. The helical transmembrane segment at 266 to 286 (IKFVMLALNAFPSCHSFILIL) threads the bilayer. Residues 287–314 (GNSKLQQTAVRLLWHLRNYTKTPNPLPL) lie on the Cytoplasmic side of the membrane.

The protein belongs to the G-protein coupled receptor T2R family.

Its subcellular location is the membrane. In terms of biological role, receptor that may play a role in the perception of bitterness and is gustducin-linked. May play a role in sensing the chemical composition of the gastrointestinal content. The activity of this receptor may stimulate alpha gustducin, mediate PLC-beta-2 activation and lead to the gating of TRPM5. This is Taste receptor type 2 member 42 (TAS2R42) from Homo sapiens (Human).